The chain runs to 389 residues: S-adenosylmethionine synthase (389 aa).

His15 provides a ligand contact to ATP. Mg(2+) is bound at residue Asp17. Glu43 contacts K(+). The L-methionine site is built by Glu56 and Gln99. A flexible loop region spans residues 99–109 (QSPDIAQGVNE). ATP contacts are provided by residues 166–168 (DAK), 234–235 (RF), Asp243, 249–250 (RK), Ala266, and Lys270. An L-methionine-binding site is contributed by Asp243. Lys274 contributes to the L-methionine binding site.

Belongs to the AdoMet synthase family. As to quaternary structure, homotetramer; dimer of dimers. Mg(2+) is required as a cofactor. K(+) serves as cofactor.

The protein localises to the cytoplasm. The enzyme catalyses L-methionine + ATP + H2O = S-adenosyl-L-methionine + phosphate + diphosphate. It participates in amino-acid biosynthesis; S-adenosyl-L-methionine biosynthesis; S-adenosyl-L-methionine from L-methionine: step 1/1. Functionally, catalyzes the formation of S-adenosylmethionine (AdoMet) from methionine and ATP. The overall synthetic reaction is composed of two sequential steps, AdoMet formation and the subsequent tripolyphosphate hydrolysis which occurs prior to release of AdoMet from the enzyme. The chain is S-adenosylmethionine synthase from Neisseria gonorrhoeae (strain NCCP11945).